The chain runs to 846 residues: Spindle pole body component SPC98 (846 aa).

2 positions are modified to phosphoserine: Ser124 and Ser136.

It belongs to the TUBGCP family. In terms of assembly, interacts with TUB4, SPC72 and SPC97.

It localises to the nucleus. It is found in the cytoplasm. The protein localises to the cytoskeleton. Its subcellular location is the microtubule organizing center. The protein resides in the spindle pole body. Involved in microtubule organization by the microtubule organizing center, the spindle pole body (SPB). Probably part of the microtubule attachment site at the SPB. The protein is Spindle pole body component SPC98 (SPC98) of Saccharomyces cerevisiae (strain ATCC 204508 / S288c) (Baker's yeast).